The chain runs to 359 residues: Phosphoserine aminotransferase (359 aa).

L-glutamate is bound at residue R42. Residues 76 to 77 (AS), W102, T152, D171, and Q194 contribute to the pyridoxal 5'-phosphate site. K195 bears the N6-(pyridoxal phosphate)lysine mark. 236-237 (NT) contacts pyridoxal 5'-phosphate.

The protein belongs to the class-V pyridoxal-phosphate-dependent aminotransferase family. SerC subfamily. As to quaternary structure, homodimer. Requires pyridoxal 5'-phosphate as cofactor.

The protein resides in the cytoplasm. It carries out the reaction O-phospho-L-serine + 2-oxoglutarate = 3-phosphooxypyruvate + L-glutamate. The enzyme catalyses 4-(phosphooxy)-L-threonine + 2-oxoglutarate = (R)-3-hydroxy-2-oxo-4-phosphooxybutanoate + L-glutamate. It functions in the pathway amino-acid biosynthesis; L-serine biosynthesis; L-serine from 3-phospho-D-glycerate: step 2/3. Its pathway is cofactor biosynthesis; pyridoxine 5'-phosphate biosynthesis; pyridoxine 5'-phosphate from D-erythrose 4-phosphate: step 3/5. In terms of biological role, catalyzes the reversible conversion of 3-phosphohydroxypyruvate to phosphoserine and of 3-hydroxy-2-oxo-4-phosphonooxybutanoate to phosphohydroxythreonine. The chain is Phosphoserine aminotransferase from Ruthia magnifica subsp. Calyptogena magnifica.